The following is a 1658-amino-acid chain: Silent chromatin protein ESC1 (1658 aa).

Basic and acidic residues predominate over residues 36–54; it reads DSKMKDQHGYSRVHNDKYR. 2 disordered regions span residues 36 to 76 and 156 to 499; these read DSKM…SSHI and TSFQ…LENE. 2 stretches are compositionally biased toward acidic residues: residues 205 to 214 and 245 to 254; these read LENDEYELSE and SNDEYAEEEG. Polar residues predominate over residues 262–286; the sequence is GQEQANVENATQISSSDSSEGQNYS. Positions 289–305 are enriched in acidic residues; that stretch reads VEMELEDDIDVESDAEK. Positions 335–352 are enriched in basic and acidic residues; it reads VIEKYESDEHKVHQRYSE. The segment covering 365–375 has biased composition (acidic residues); that stretch reads VDDESEDEESQ. A compositionally biased stretch (basic and acidic residues) spans 386–397; the sequence is VYHHNEHELDDK. Residues 398–407 are compositionally biased toward acidic residues; sequence ELIEDIESSD. Positions 408–417 are enriched in low complexity; sequence SESQSAQESE. 3 stretches are compositionally biased toward basic and acidic residues: residues 425 to 435, 442 to 461, and 471 to 482; these read EYKMKNEKSTS, SESR…KVEQ, and DDIIRSSLDKNF. Position 500 is a phosphothreonine (Thr-500). A Phosphoserine modification is found at Ser-532. Disordered regions lie at residues 550 to 584 and 589 to 608; these read SRNS…DESE and LKDF…GDLS. The segment covering 568–577 has biased composition (polar residues); sequence GHSNGSNLSG. 4 positions are modified to phosphoserine: Ser-579, Ser-583, Ser-608, and Ser-662. Disordered regions lie at residues 770 to 819, 863 to 964, and 1082 to 1115; these read SKET…EDNT, EMSS…VKGT, and ENNT…GSAK. Residues 800–812 show a composition bias toward polar residues; that stretch reads QSKNFPGVANSTD. A phosphoserine mark is found at Ser-865 and Ser-866. Basic and acidic residues predominate over residues 869-878; that stretch reads ECVKQNDDGS. Polar residues predominate over residues 879–905; that stretch reads KTQISFSTDSPDNFQESNDNTEFSSTK. 2 positions are modified to phosphoserine: Ser-888 and Ser-911. The span at 918 to 931 shows a compositional bias: basic and acidic residues; sequence SLKKELTKAEVVDK. Acidic residues predominate over residues 932–956; sequence LDEEESEDSYEQDYADPEPGNDEGS. Residues Ser-937, Ser-1092, Ser-1096, Ser-1098, Ser-1166, Ser-1176, and Ser-1178 each carry the phosphoserine modification. Residues 1082-1096 show a composition bias toward polar residues; the sequence is ENNTNMHDQVSQACS. The segment covering 1097–1115 has biased composition (basic and acidic residues); sequence DSDRDQDSTAEKNVEGSAK. Over residues 1197-1207 the composition is skewed to polar residues; that stretch reads STDASVNMKSV. Residues 1197-1216 form a disordered region; sequence STDASVNMKSVSSKERDSDE. A phosphoserine mark is found at Ser-1214 and Ser-1254. Residues 1261–1272 show a composition bias toward basic and acidic residues; it reads VKDKENLHKSEE. The disordered stretch occupies residues 1261 to 1315; it reads VKDKENLHKSEEPLVEGLQSEQHFEKKDHSENEEEFDTIYGDITSANIHSNAPDD. A phosphoserine mark is found at Ser-1290, Ser-1326, and Ser-1332. Disordered regions lie at residues 1334 to 1482 and 1503 to 1658; these read RLIE…TSPE and PATT…SVDK. Over residues 1335–1366 the composition is skewed to basic and acidic residues; it reads LIEDSRRGKNQEESDEVNTSRERDLTFEKSVN. Phosphoserine is present on residues Ser-1403, Ser-1409, Ser-1450, and Ser-1454. Residues 1407–1423 are compositionally biased toward acidic residues; that stretch reads LNSEPEEAELYELEIEG. Residues 1463–1479 show a composition bias toward polar residues; that stretch reads YPYSNSENITAEKSAPT. Residues 1507 to 1537 are compositionally biased toward basic and acidic residues; it reads LEKHDKTNVTSVLDDRSEHLSSHDVDNEPHD. Ser-1539 is modified (phosphoserine). 2 stretches are compositionally biased toward basic and acidic residues: residues 1550–1564 and 1575–1591; these read PEHQ…VEVK and VLEE…DKSS. A phosphoserine mark is found at Ser-1590 and Ser-1591. Basic residues predominate over residues 1607–1626; it reads TKAKKKSRKRNYNSRRRKRK. A compositionally biased stretch (polar residues) spans 1648 to 1658; the sequence is RGQNTHPSVDK.

In terms of assembly, interacts with SIR4.

It is found in the nucleus. Its function is as follows. Involved in the clustering of telomeres at the nuclear periphery, forming discrete subcompartments that accumulate a complex of histone-binding silencing factors like SIR4. Required for SIR4-mediated anchoring and partitioning of plasmids. This is Silent chromatin protein ESC1 (ESC1) from Saccharomyces cerevisiae (strain ATCC 204508 / S288c) (Baker's yeast).